The sequence spans 584 residues: HERV-H_2q24.3 provirus ancestral Env polyprotein (584 aa).

Residues 1 to 35 form the signal peptide; the sequence is MIFAGKAPSNTSTLMKFYSLLLYSLLFSFPFLCHP. The Extracellular segment spans residues 36–523; it reads LPLPSYLHHT…WALSNWMSWV (488 aa). The N-linked (GlcNAc...) asparagine glycan is linked to asparagine 47. Positions 64-67 match the CXXC motif; sequence CWLC. N-linked (GlcNAc...) asparagine glycosylation is found at asparagine 199, asparagine 222, asparagine 265, asparagine 283, asparagine 352, and asparagine 370. The segment at 388 to 408 is fusion peptide; sequence VIPLIPLMVGLGLSASTVALG. Residues 454 to 470 carry the CKS-17 motif; that stretch reads LQNRRGLDLLTAEKGGL. A disulfide bridge links cysteine 471 with cysteine 478. The short motif at 471 to 479 is the CX6CC element; sequence CIFLNEECC. An N-linked (GlcNAc...) asparagine glycan is attached at asparagine 483. The helical transmembrane segment at 524-544 threads the bilayer; that stretch reads LPIVSPLIPIFLLLLFGPCIF. Topologically, residues 545-584 are cytoplasmic; the sequence is RLVSQFIQNRIQAITNHSIRQMFLLTSPQYHPLPQDLPSA.

Belongs to the gamma type-C retroviral envelope protein family. HERV class-I H env subfamily. In terms of assembly, the surface (SU) and transmembrane (TM) proteins form a heterodimer. SU and TM are attached by noncovalent interactions or by a labile interchain disulfide bond. Specific enzymatic cleavages in vivo yield the mature SU and TM proteins. In terms of processing, the CXXC motif is highly conserved across a broad range of retroviral envelope proteins. It is thought to participate in the formation of a labile disulfide bond possibly with the CX6CC motif present in the transmembrane protein. Isomerization of the intersubunit disulfide bond to an SU intrachain disulfide bond is thought to occur upon receptor recognition in order to allow membrane fusion. As to expression, low expression in skin and testis. No expression in several cell lines.

It is found in the virion. The protein localises to the cell membrane. Its function is as follows. Retroviral envelope proteins mediate receptor recognition and membrane fusion during early infection. Endogenous envelope proteins may have kept, lost or modified their original function during evolution. This endogenous envelope protein has lost its original fusogenic properties but has immunosuppressive properties in vivo. In terms of biological role, SU mediates receptor recognition. Functionally, TM anchors the envelope heterodimer to the viral membrane through one transmembrane domain. The other hydrophobic domain, called fusion peptide, mediates fusion of the viral membrane with the target cell membrane. The chain is HERV-H_2q24.3 provirus ancestral Env polyprotein from Homo sapiens (Human).